The primary structure comprises 850 residues: Bifunctional uridylyltransferase/uridylyl-removing enzyme (850 aa).

A uridylyltransferase region spans residues 1-317; the sequence is MSARPFADLR…LFPVVAPPLP (317 aa). Residues 318-673 are uridylyl-removing; it reads IDDDFQLRAG…ARLSPAGEGI (356 aa). The region spanning 436 to 558 is the HD domain; sequence VDEHILTVLR…VGDTRRLDAL (123 aa). ACT domains are found at residues 674 to 755 and 783 to 850; these read QVMV…AVQP and VLSI…GVLG.

This sequence belongs to the GlnD family. Mg(2+) is required as a cofactor.

It catalyses the reaction [protein-PII]-L-tyrosine + UTP = [protein-PII]-uridylyl-L-tyrosine + diphosphate. It carries out the reaction [protein-PII]-uridylyl-L-tyrosine + H2O = [protein-PII]-L-tyrosine + UMP + H(+). With respect to regulation, uridylyltransferase (UTase) activity is inhibited by glutamine, while glutamine activates uridylyl-removing (UR) activity. Functionally, modifies, by uridylylation and deuridylylation, the PII regulatory proteins (GlnB and homologs), in response to the nitrogen status of the cell that GlnD senses through the glutamine level. Under low glutamine levels, catalyzes the conversion of the PII proteins and UTP to PII-UMP and PPi, while under higher glutamine levels, GlnD hydrolyzes PII-UMP to PII and UMP (deuridylylation). Thus, controls uridylylation state and activity of the PII proteins, and plays an important role in the regulation of nitrogen assimilation and metabolism. The protein is Bifunctional uridylyltransferase/uridylyl-removing enzyme of Thiobacillus denitrificans (strain ATCC 25259 / T1).